We begin with the raw amino-acid sequence, 182 residues long: Translation initiation factor IF-3 (182 aa).

It belongs to the IF-3 family. Monomer.

It is found in the cytoplasm. In terms of biological role, IF-3 binds to the 30S ribosomal subunit and shifts the equilibrium between 70S ribosomes and their 50S and 30S subunits in favor of the free subunits, thus enhancing the availability of 30S subunits on which protein synthesis initiation begins. The polypeptide is Translation initiation factor IF-3 (Endomicrobium trichonymphae).